Reading from the N-terminus, the 1113-residue chain is MESKAWESNNEDLLSSSGVTSNGGSSSSFFVSSIRGTIIENTSSAGTLTQVPFFPKYEVELDSPRKIIPSPGKEHFERVLEEYSHQVKDLQRRLNESNELHEKQKFYLRQSVIDLQTKLQEMQMERDAMADIRRRESQSQEDLRNQLQNTVHELEAAKCLKEDMLKDSNTQIEQLRKMMLSHEGVLQEIRSILVDFEEASGKKICEHDSMSTLHFRSLGSAISKILRELDTEISYLKGRIFPVEDQLEALKSESQNKIELLLQQHQDRIEQLISEHEVEITGLTEKASSARSQANSIQSQMEIIQEQARNQNSMYMRQLSDLESTVSQLRSELREAKRMYEDKTEELEKQLVLANSELTEARTERDQFSQESGNLDDQLQKLLADLHKREKELSLEKEQNKRLWDRDTGNSITIDHLRRELDNRNMEVQRLEALLKALKSECQGQMERQMAAIQGKNESLEKVSSLTAQLESTKEMLRKVVEELTAKKMTLESSERTISDLTTSLQEKERAIEATNAEITKLRSRVDLKLQELQHLKNEGDHLRNVQTECEALKLQMTEKDKVIEILRQQIENMTQLVGQHGRTAGAMQVEKAQLEKEINDRRMELKELKILKDKKDAKIRELEARVSDLELEKVKLVNAGSERLRAVKDIKQERDQLLNEVKTSRSELNNLSEEYEVLKRNFRNKSEEMEMTTNKLKMQLKSAQSELEQTRNTLKSMEGSDGHAMKVAMGMQKQITAKRGQIDALQSKIQFLEEAMTNANKEKHFLKEEKSKLSQELSTVATEKNKMAGELEVLRSQERRLKEKVTNMEVALDKASLQFAECQDIIQRQEQESVRLKLQHTLDIKELQGPGYTSNSSLKPRLLQPASVTRSHSNVPSSQSTASFLSHHSTKANTLKEDPTRDLKQLLQELRSVINEEPAVSLSKTEEDGRTSLGALEDRVRDCITESSLRSDMCHRSNNSLRDSTEGSKSSETLSREPVTLHAGDREDPSGCFTFTSAASPSVKNSASRSFNSSPKKSPVHSLLTSSVEGSIGSTSQYRSAKPIHSSDSVKDSQSPPIETTGKTCRKLQNRLESLQTLVEDLQLKNQAMSSMIRNQEKRIQKVKDQEKMLLK.

Residues 1–14 (MESKAWESNNEDLL) show a composition bias toward polar residues. The disordered stretch occupies residues 1-26 (MESKAWESNNEDLLSSSGVTSNGGSS). Residues 15–26 (SSSGVTSNGGSS) show a composition bias toward low complexity. Coiled coils occupy residues 72–183 (GKEH…LSHE) and 243–833 (VEDQ…QEQE). Disordered stretches follow at residues 848-902 (LQGP…DPTR) and 955-1062 (CHRS…IETT). Polar residues-rich tracts occupy residues 867 to 894 (ASVT…TKAN), 955 to 974 (CHRS…SSET), 994 to 1017 (FTFT…SSPK), 1024 to 1040 (LLTS…SQYR), and 1053 to 1062 (DSQSPPIETT). Positions 1061–1113 (TTGKTCRKLQNRLESLQTLVEDLQLKNQAMSSMIRNQEKRIQKVKDQEKMLLK) form a coiled coil.

The sequence is that of Coiled-coil domain-containing protein 158 (CCDC158) from Homo sapiens (Human).